A 172-amino-acid chain; its full sequence is Small ribosomal subunit protein uS5 (172 aa).

The S5 DRBM domain maps to 17–80 (LREKMIAVNR…DEARRKMVKV (64 aa)).

Belongs to the universal ribosomal protein uS5 family. As to quaternary structure, part of the 30S ribosomal subunit. Contacts proteins S4 and S8.

Functionally, with S4 and S12 plays an important role in translational accuracy. Its function is as follows. Located at the back of the 30S subunit body where it stabilizes the conformation of the head with respect to the body. In Ralstonia nicotianae (strain ATCC BAA-1114 / GMI1000) (Ralstonia solanacearum), this protein is Small ribosomal subunit protein uS5.